A 757-amino-acid polypeptide reads, in one-letter code: RNA-directed RNA polymerase catalytic subunit (757 aa).

The interval 53–82 (GRWTKNTETGAPQLNPIDGPLPKDNEPSGY) is disordered. 2 consecutive short sequence motifs (nuclear localization signal) follow at residues 187-195 (RKRRVRDNV) and 203-216 (RTIG…NKRS). The interval 249-256 (RGFVYFVE) is promoter-binding site. The region spanning 286-483 (VRKMMTNSQD…GINMSKKKSY (198 aa)) is the RdRp catalytic domain.

The protein belongs to the influenza viruses polymerase PB1 family. In terms of assembly, influenza RNA polymerase is composed of three subunits: PB1, PB2 and PA. Interacts (via N-terminus) with PA (via C-terminus). Interacts (via C-terminus) with PB2 (via N-terminus); this interaction is essential for transcription initiation. Interacts (via C-terminus) with human PKP2 (via N-terminus); the interaction competitively inhibits the interaction between the RNA polymerase subunits PB1 and PB2. Post-translationally, phosphorylated by host PRKCA.

The protein resides in the host nucleus. The protein localises to the host cytoplasm. The catalysed reaction is RNA(n) + a ribonucleoside 5'-triphosphate = RNA(n+1) + diphosphate. Its function is as follows. RNA-dependent RNA polymerase which is responsible for replication and transcription of virus RNA segments. The transcription of viral mRNAs occurs by a unique mechanism called cap-snatching. 5' methylated caps of cellular mRNAs are cleaved after 10-13 nucleotides by PA. In turn, these short capped RNAs are used as primers by PB1 for transcription of viral mRNAs. During virus replication, PB1 initiates RNA synthesis and copy vRNA into complementary RNA (cRNA) which in turn serves as a template for the production of more vRNAs. In Influenza A virus (strain A/Brazil/11/1978 H1N1), this protein is RNA-directed RNA polymerase catalytic subunit.